A 373-amino-acid polypeptide reads, in one-letter code: 3-dehydroquinate synthase (373 aa).

Residues 107–111 (GVIGD), 131–132 (TS), K144, and K153 contribute to the NAD(+) site. Positions 186, 249, and 267 each coordinate Zn(2+).

This sequence belongs to the sugar phosphate cyclases superfamily. Dehydroquinate synthase family. Requires Co(2+) as cofactor. Zn(2+) serves as cofactor. NAD(+) is required as a cofactor.

Its subcellular location is the cytoplasm. It catalyses the reaction 7-phospho-2-dehydro-3-deoxy-D-arabino-heptonate = 3-dehydroquinate + phosphate. It participates in metabolic intermediate biosynthesis; chorismate biosynthesis; chorismate from D-erythrose 4-phosphate and phosphoenolpyruvate: step 2/7. Catalyzes the conversion of 3-deoxy-D-arabino-heptulosonate 7-phosphate (DAHP) to dehydroquinate (DHQ). In Ruegeria sp. (strain TM1040) (Silicibacter sp.), this protein is 3-dehydroquinate synthase.